Reading from the N-terminus, the 416-residue chain is Zinc finger protein 92 homolog (416 aa).

Residues 14–85 (VSFEDVSVYF…DIPRTWATAG (72 aa)) enclose the KRAB domain. Residues 86-125 (LHIGDRTQSKTSTSTQKHSGRQLPGADPQGGKEGQAARSS) form a disordered region. 8 C2H2-type zinc fingers span residues 152 to 174 (YLCQ…RIIH), 180 to 202 (YACP…QRIH), 208 to 230 (YACP…QVIH), 236 to 258 (FACG…ARVH), 264 to 286 (YACP…QRTH), 292 to 314 (YACG…QRSH), 320 to 342 (FACR…RRVH), and 348 to 370 (YECS…QAVH). The tract at residues 368 to 416 (AVHGARRPAKAETARRLAGPGSTGPGSAVAATSPPRPSTAARPSRPSRR) is disordered. Positions 394-416 (SAVAATSPPRPSTAARPSRPSRR) are enriched in low complexity.

Belongs to the krueppel C2H2-type zinc-finger protein family.

The protein localises to the nucleus. Its function is as follows. KRAB domain-containing zinc-finger protein that represses B1/Alu SINE transposable elements and modulates the transcription of nearby genes in a tissue-specific manner. It regulates glucose homeostasis and lipid metabolism by modulating the expression of the endocrine cell-defining transcription factor, MAFB, in pancreatic islets and, the fat metabolism regulator, ACACB, in adipose tissue and muscle. In Homo sapiens (Human), this protein is Zinc finger protein 92 homolog (ZFP92).